Consider the following 271-residue polypeptide: Potential ATP-binding protein (271 aa).

Residue 34–41 (GQPGVGKT) participates in ATP binding.

The protein is Potential ATP-binding protein of Staphylococcus aureus.